The chain runs to 85 residues: Large ribosomal subunit protein bL27 (85 aa).

Residues 1–24 (MAHKKAGGSSRNGRDSNSKRLGVK) form a disordered region.

It belongs to the bacterial ribosomal protein bL27 family.

The polypeptide is Large ribosomal subunit protein bL27 (Nitrosospira multiformis (strain ATCC 25196 / NCIMB 11849 / C 71)).